Here is a 511-residue protein sequence, read N- to C-terminus: Histidine ammonia-lyase (511 aa).

A cross-link (5-imidazolinone (Ala-Gly)) is located at residues 143-145; the sequence is ASG. Ser-144 carries the post-translational modification 2,3-didehydroalanine (Ser).

It belongs to the PAL/histidase family. Post-translationally, contains an active site 4-methylidene-imidazol-5-one (MIO), which is formed autocatalytically by cyclization and dehydration of residues Ala-Ser-Gly.

Its subcellular location is the cytoplasm. The enzyme catalyses L-histidine = trans-urocanate + NH4(+). It functions in the pathway amino-acid degradation; L-histidine degradation into L-glutamate; N-formimidoyl-L-glutamate from L-histidine: step 1/3. In Vibrio cholerae serotype O1 (strain ATCC 39315 / El Tor Inaba N16961), this protein is Histidine ammonia-lyase.